We begin with the raw amino-acid sequence, 482 residues long: MLHLSEFSGPDALLVKSTEGCCSEPSTDLTRLPARDPPAATGYPAGDFLSWALSSCGAGEYLTDSCLLEGPAPTPPPGLGYSGSFFIQAVPEHPHDPEALFNLMSGILGLTPFPGAEAAASRSPLDASFPAGSDALLPGPPDLFSPDPGAAAFPEAFWEASPSAGAPSQCLYEPHLSAPDVKPGLRAPPASPALDTASAFKGPYSPWELLSAGAPGSCGSQGGYQAAPEARFPTTGAKIEDLLSISCPAELPGGPASRLYTMGTYDAFPLAPGDLGEGAESLPGLLTPPSGEGGSSGEGGEFLDGTQPELSPLGLRSATADLPKPLVADIPGSSAVPEPPVPPPAPFPPAKARRKGRRGGKCSARCFCPRPHAKAFACPVESCVRSFARSDELNRHLRIHTGHKPFQCRICLRNFSRSDHLTTHVRTHTGEKPFACDVCGRRFARSDEKKRHSKVHLKQKARAEERLKGLGFYSLGLSFAAL.

The tract at residues 274 to 357 (DLGEGAESLP…PPAKARRKGR (84 aa)) is disordered. Residues 280-290 (ESLPGLLTPPS) are compositionally biased toward low complexity. Over residues 291–302 (GEGGSSGEGGEF) the composition is skewed to gly residues. Residues 337 to 349 (PEPPVPPPAPFPP) show a composition bias toward pro residues. 3 consecutive C2H2-type zinc fingers follow at residues 376–400 (FACP…LRIH), 406–428 (FQCR…VRTH), and 434–456 (FACD…SKVH).

Belongs to the EGR C2H2-type zinc-finger protein family. Expressed in brain. In the cerebellum and frontal cortex.

Its subcellular location is the nucleus. In terms of biological role, transcriptional regulator. Recognizes and binds to the DNA sequence 5'-GCGGGGGCG-3' (GSG). Activates the transcription of target genes whose products are required for mitogenesis and differentiation. The chain is Early growth response protein 4 (EGR4) from Bos taurus (Bovine).